The chain runs to 454 residues: Replicative DNA helicase DnaC (454 aa).

In terms of domain architecture, SF4 helicase spans 179 to 445 (RKGDITGIPT…NKFVNLERRF (267 aa)). Residue 210–217 (ARPSVGKT) participates in ATP binding.

It belongs to the helicase family. DnaB subfamily. The DNA replisome assembles sequentially on oriC in this order; DnaA, DnaD, DnaB, DnaI-DnaC helicase. Monomer in the absence of ATP, in its presence forms a probable homohexamer which is not active as a helicase in vitro. Interacts separately and simultaneously with helicase loaders DnaB and DnaI. Interaction with DnaB does not require ATP. Interaction with DnaI requires ATP, probably forms a DnaC(6):DnaI(6) complex, which is not active as a helicase.

Its subcellular location is the cytoplasm. It is found in the nucleoid. It carries out the reaction Couples ATP hydrolysis with the unwinding of duplex DNA at the replication fork by translocating in the 5'-3' direction. This creates two antiparallel DNA single strands (ssDNA). The leading ssDNA polymer is the template for DNA polymerase III holoenzyme which synthesizes a continuous strand.. The enzyme catalyses ATP + H2O = ADP + phosphate + H(+). Functionally, the main replicative DNA helicase, it participates in initiation and elongation during chromosome replication. Travels ahead of the DNA replisome, separating dsDNA into templates for DNA synthesis. The monomer has helicase activity in the presence of DnaI which is further increased by DnaB; the purified oligomeric form (probably a DnaC hexamer) does not have helicase activity in vitro, nor does the DnaC(6):DnaI(6) complex. The direction was not determined but is probably 5'-3'. Helicase activity requires an rNTP and is inactive with dNTPs. Has weak ATPase activity as a monomer, as an oligomer has ATPase activity which is stimulated by single-stranded (ss)DNA and further stimulated by DnaI and more by DnaB. Deletion of a single T residue in the promoter region (a run of 8 Ts becomes 7 Ts) decreases the helicase levels by 50%, decreasing DNA replication inititation during fast growth in rich medium. Suppresses the synthetic lethality of a dnaA1-yabA deletion for growth on rich medium. The chain is Replicative DNA helicase DnaC from Bacillus subtilis (strain 168).